Reading from the N-terminus, the 517-residue chain is Gamma-1-syntrophin (517 aa).

The PDZ domain occupies 57 to 140 (TVTIRRQTVG…EVTLTVSFLK (84 aa)). The PH domain maps to 283-390 (QIVYMGWCEA…WERAFQTATF (108 aa)).

This sequence belongs to the syntrophin family. Isoform 1, but not isoform 2, interacts with the dystrophin protein DMD and related proteins DTNA and DTNB. Interacts with DGKZ. As to expression, brain specific. In CNS, it is expressed in the perikaryon and proximal portion of the neuronal processes. Strong expression in the hippocampus, neuron-rich dendate granule cells, and pyramidal cell layers. Highly expressed in neurons of the cerebral cortex. Also expressed in the cerebellar cortex, deep cerebellar nuclei, thalamus, and basal ganglia. No expression in muscle cells.

It is found in the cytoplasm. Its subcellular location is the cytoskeleton. The protein localises to the nucleus. In terms of biological role, adapter protein that binds to and probably organizes the subcellular localization of a variety of proteins. May link various receptors to the actin cytoskeleton and the dystrophin glycoprotein complex. May participate in regulating the subcellular location of diacylglycerol kinase-zeta to ensure that diacylglycerol is rapidly inactivated following receptor activation. The chain is Gamma-1-syntrophin (SNTG1) from Homo sapiens (Human).